The primary structure comprises 51 residues: Astexin-1 (51 aa).

A propeptide spanning residues 1 to 28 (MHTPIISETVQPKTAGLIVLGKASAETR) is cleaved from the precursor. The segment at residues 29–37 (GLSQGVEPD) is a cross-link (isoaspartyl glycine isopeptide (Gly-Asp)).

This lasso peptide is probably hydrolyzed to a linear form by the isopeptidase AtxE1, in vivo.

In terms of biological role, shows weak antimicrobial activity against its phylogenetic relative Caulobacter crescentus. Does not show activity against other bacteria tested (E.coli, Vibrio sp, Burkhoderia thailandensis, and Salmonella newport). This chain is Astexin-1, found in Asticcacaulis excentricus (strain ATCC 15261 / DSM 4724 / KCTC 12464 / NCIMB 9791 / VKM B-1370 / CB 48).